Reading from the N-terminus, the 1031-residue chain is Exportin-T (1031 aa).

Belongs to the exportin family.

The protein resides in the nucleus. The protein localises to the cytoplasm. Functionally, tRNA nucleus export receptor which facilitates tRNA translocation across the nuclear pore complex. Involved in pre-tRNA splicing, probably by affecting the interaction of pre-tRNA with splicing endonuclease. This Emericella nidulans (strain FGSC A4 / ATCC 38163 / CBS 112.46 / NRRL 194 / M139) (Aspergillus nidulans) protein is Exportin-T (los1).